Reading from the N-terminus, the 132-residue chain is NADH-quinone oxidoreductase subunit A (132 aa).

A run of 3 helical transmembrane segments spans residues 14-34, 66-86, and 96-116; these read FFTFFFIAVSICVFMLSISWI, FYLVAIYFVLFDVEALYLYAW, and IGFIEALIFILFLLSGLIYLI.

This sequence belongs to the complex I subunit 3 family. As to quaternary structure, NDH-1 is composed of 13 different subunits. Subunits NuoA, H, J, K, L, M, N constitute the membrane sector of the complex.

Its subcellular location is the cell membrane. The enzyme catalyses a quinone + NADH + 5 H(+)(in) = a quinol + NAD(+) + 4 H(+)(out). Its function is as follows. NDH-1 shuttles electrons from NADH, via FMN and iron-sulfur (Fe-S) centers, to quinones in the respiratory chain. The immediate electron acceptor for the enzyme in this species is believed to be ubiquinone. Couples the redox reaction to proton translocation (for every two electrons transferred, four hydrogen ions are translocated across the cytoplasmic membrane), and thus conserves the redox energy in a proton gradient. This Buchnera aphidicola subsp. Baizongia pistaciae (strain Bp) protein is NADH-quinone oxidoreductase subunit A.